Here is a 173-residue protein sequence, read N- to C-terminus: Ribulose bisphosphate carboxylase small subunit, chloroplastic 3 (173 aa).

A chloroplast-targeting transit peptide spans 1-49; it reads MASIPATVATVAQANMVAPFTGLKSNAAFPVTKKVNDFSTLPSNGGRVQ.

This sequence belongs to the RuBisCO small chain family. As to quaternary structure, heterohexadecamer of 8 large and 8 small subunits.

The protein localises to the plastid. It localises to the chloroplast. In terms of biological role, ruBisCO catalyzes two reactions: the carboxylation of D-ribulose 1,5-bisphosphate, the primary event in carbon dioxide fixation, as well as the oxidative fragmentation of the pentose substrate. Both reactions occur simultaneously and in competition at the same active site. Although the small subunit is not catalytic it is essential for maximal activity. This Flaveria pringlei protein is Ribulose bisphosphate carboxylase small subunit, chloroplastic 3.